The primary structure comprises 341 residues: Major histocompatibility complex class I-related protein 1 (341 aa).

The first 18 residues, 1-18, serve as a signal peptide directing secretion; the sequence is MMLLLPLLAVFLVKRSHT. An alpha-1 region spans residues 19–105; sequence RTHSLRYFRL…RHLQRHYNHS (87 aa). Positions 19 to 197 are antigen-binding cleft; the sequence is RTHSLRYFRL…EYGRDTLERT (179 aa). The Extracellular portion of the chain corresponds to 19–296; sequence RTHSLRYFRL…APRESGDILR (278 aa). 2 residues coordinate 8-(9H-purin-6-yl)-2-oxa-8-azabicyclo[3.3.1]nona-3,6-diene-4,6-dicarbaldehyde: Y25 and R27. 5-(2-oxoethylideneamino)-6-(D-ribitylamino)uracil is bound by residues R27, S42, and K61. Residues R27, S42, and K61 each coordinate 5-(2-oxopropylideneamino)-6-(D-ribitylamino)uracil. 7-hydroxy-6-methyl-8-(1-D-ribityl)lumazine contacts are provided by R27, S42, and K61. Residues K61 and H76 each contribute to the 8-(9H-purin-6-yl)-2-oxa-8-azabicyclo[3.3.1]nona-3,6-diene-4,6-dicarbaldehyde site. K61 is a binding site for 2-amino-4-oxopteridine-6-carbaldehyde. Residue K61 coordinates pyridoxal. N103 carries an N-linked (GlcNAc...) asparagine glycan. Residues 106–197 form an alpha-2 region; it reads GLHTYQRMIG…EYGRDTLERT (92 aa). R112 is an 8-(9H-purin-6-yl)-2-oxa-8-azabicyclo[3.3.1]nona-3,6-diene-4,6-dicarbaldehyde binding site. Positions 112, 170, and 171 each coordinate 5-(2-oxoethylideneamino)-6-(D-ribitylamino)uracil. The 5-(2-oxopropylideneamino)-6-(D-ribitylamino)uracil site is built by R112, Y170, and Q171. Positions 112, 170, and 171 each coordinate 7-hydroxy-6-methyl-8-(1-D-ribityl)lumazine. 2 disulfides stabilise this stretch: C116–C179 and C218–C274. The alpha-3 stretch occupies residues 198–289; that stretch reads EHPVVRTTRK…GRQMVLEAPR (92 aa). Residues 200–301 enclose the Ig-like C1-type domain; it reads PVVRTTRKET…GDILRVSTIS (102 aa). A connecting peptide region spans residues 290 to 296; the sequence is ESGDILR. Residues 297-317 form a helical membrane-spanning segment; the sequence is VSTISGTTILIIALAGVGVLI. Topologically, residues 318–341 are cytoplasmic; sequence WRRSQELKEVMYQPTQVNEGSSPS.

The protein belongs to the MHC class I family. As to quaternary structure, heterotrimer that consists of MR1, B2M and metabolite antigen. Major classes of metabolite ligands presented by MR1 include riboflavin-related antigens, pyrimidines and ribityl lumazines, nucleobase adducts and folate derivatives. Forms reversible covalent Schiff base complexes with microbial pyrimidine-based metabolite, which serves as a molecular switch triggering complete folding, stable association with B2M and translocation of the ternary complex from endoplasmic reticulum to the plasma membrane. Alternatively, forms non-Schiff base complexes with ribityl lumazines. On antigen-presenting cells, the ternary complex interacts with TCR on MR1-restricted CD4- or CD8-positive T cell subsets. Interacts with TAPBP and TAPBPL chaperones in the endoplasmic reticulum. TAPBP associated or not with MHC class I peptide loading complex binds ligand-free MR1 or MR1-B2M complex, providing for stable MR1 pools ready for metabolite antigen processing. TAPBPL interacts with MR1 in a ligand-independent way; this interaction may stabilize MR1 pool and facilitate ligand loading and dissociation. Structurally, MR1-B2M heterodimer adopts a topology similar to classical MHC class I molecules, with alpha-1 and alpha-2 domains of MR1 forming the antigen-binding cleft composed of two alpha-helices resting on a floor of 7-stranded anti-parallel beta-pleated sheet. Post-translationally, N-glycosylated. In terms of tissue distribution, highly expressed thymus. Expressed in liver, kidney, spleen, heart, brain, lung, skeletal muscle and testis.

It localises to the cell membrane. Its subcellular location is the endoplasmic reticulum membrane. It is found in the golgi apparatus membrane. The protein localises to the early endosome membrane. The protein resides in the late endosome membrane. Its function is as follows. Antigen-presenting molecule specialized in displaying microbial pyrimidine-based metabolites to alpha-beta T cell receptors (TCR) on innate-type mucosal-associated invariant T (MAIT) cells. In complex with B2M preferentially presents riboflavin-derived metabolites to semi-invariant TRAV1 TCRs on MAIT cells, guiding immune surveillance of the microbial metabolome at mucosal epithelial barriers. Signature pyrimidine-based microbial antigens are generated via non-enzymatic condensation of metabolite intermediates of the riboflavin pathway with by-products arising from other metabolic pathways such as glycolysis. Typical potent antigenic metabolites are 5-(2-oxoethylideneamino)-6-D-ribitylaminouracil (5-OE-RU) and 5-(2-oxopropylideneamino)-6-D-ribitylaminouracil (5-OP-RU), products of condensation of 5-amino-6-D-ribityaminouracil (5-A-RU) with glyoxal or methylglyoxal by-products, respectively. May present microbial antigens to various TRAV1-negative MAIT cell subsets, providing for unique recognition of diverse microbes, including pathogens that do not synthesize riboflavin. Upon antigen recognition, elicits rapid innate-type MAIT cell activation to eliminate pathogenic microbes by directly killing infected cells. During T cell development, drives thymic selection and post-thymic terminal differentiation of MAIT cells in a process dependent on commensal microflora. Acts as an immune sensor of cancer cell metabolome. May present a tumor-specific or -associated metabolite essential for cancer cell survival to a pan-cancer TCR on a non-MAIT CD8-positive T cell clone, triggering T cell-mediated killing of a wide range of cancer cell types. May present tumor-enriched pyridoxal and pyridoxal 5'-phosphate antigens, enabling preferential recognition of cancer cells. Presents nucleobase carbonyl adducts generated during oxidative stress. Captures M3Ade, a nucleobase adduct composed of one adenine modified by a malondialdehyde trimer, for recognition by MR1-restricted T cell clones expressing a polyclonal TCR repertoire. The chain is Major histocompatibility complex class I-related protein 1 from Mus musculus (Mouse).